A 195-amino-acid polypeptide reads, in one-letter code: Pyridoxal 5'-phosphate synthase subunit PdxT (195 aa).

46-48 (GES) is a binding site for L-glutamine. C78 (nucleophile) is an active-site residue. Residues R106 and 134–135 (IR) each bind L-glutamine. Catalysis depends on charge relay system residues H170 and E172.

Belongs to the glutaminase PdxT/SNO family. In the presence of PdxS, forms a dodecamer of heterodimers. Only shows activity in the heterodimer.

It carries out the reaction aldehydo-D-ribose 5-phosphate + D-glyceraldehyde 3-phosphate + L-glutamine = pyridoxal 5'-phosphate + L-glutamate + phosphate + 3 H2O + H(+). The catalysed reaction is L-glutamine + H2O = L-glutamate + NH4(+). It functions in the pathway cofactor biosynthesis; pyridoxal 5'-phosphate biosynthesis. In terms of biological role, catalyzes the hydrolysis of glutamine to glutamate and ammonia as part of the biosynthesis of pyridoxal 5'-phosphate. The resulting ammonia molecule is channeled to the active site of PdxS. In Pseudothermotoga lettingae (strain ATCC BAA-301 / DSM 14385 / NBRC 107922 / TMO) (Thermotoga lettingae), this protein is Pyridoxal 5'-phosphate synthase subunit PdxT.